Here is a 272-residue protein sequence, read N- to C-terminus: Transcription factor E2F6 (272 aa).

Residues 1 to 62 (MSQQRTARRQ…MRKALKVKRP (62 aa)) form a binding to corepressors region. The DNA-binding element occupies 50–129 (YVSMRKALKV…SKNHIRWIGS (80 aa)). The short motif at 95-129 (KLGVRKRRVYDITNVLDGIELVEKKSKNHIRWIGS) is the DEF box element. Positions 130 to 222 (DLNNFGAAPQ…PAPREDSITV (93 aa)) are dimerization. Residues 143–164 (LQAELSDLSAMEDALDELIKDC) form a leucine-zipper region. The tract at residues 173-272 (DDKENERLAY…CPEKEDEPPQ (100 aa)) is transcription repression. Residues 242–272 (HSNGKTNDGIGASPSKSSHPQCPEKEDEPPQ) form a disordered region.

Belongs to the E2F/DP family. Forms heterodimers with DP family members TFDP1 or TFDP2. Component of the DRTF1/E2F transcription factor complex. Part of the E2F6.com-1 complex in G0 phase composed of E2F6, MGA, MAX, TFDP1, CBX3, BAT8, EUHMTASE1, RING1, RNF2, MBLR, L3MBTL2 and YAF2. Component of some MLL1/MLL complex, at least composed of the core components KMT2A/MLL1, ASH2L, HCFC1/HCF1, WDR5 and RBBP5, as well as the facultative components BACC1, CHD8, E2F6, HSP70, INO80C, KANSL1, LAS1L, MAX, MCRS1, MGA, KAT8/MOF, PELP1, PHF20, PRP31, RING2, RUVB1/TIP49A, RUVB2/TIP49B, SENP3, TAF1, TAF4, TAF6, TAF7, TAF9 and TEX10.

The protein resides in the nucleus. Inhibitor of E2F-dependent transcription. Binds DNA cooperatively with DP proteins through the E2 recognition site, 5'-TTTC[CG]CGC-3'. Has a preference for the 5'-TTTCCCGC-3' E2F recognition site. E2F6 lacks the transcriptional activation and pocket protein binding domains. Appears to regulate a subset of E2F-dependent genes whose products are required for entry into the cell cycle but not for normal cell cycle progression. Represses expression of some meiosis-specific genes, including SLC25A31/ANT4. May silence expression via the recruitment of a chromatin remodeling complex containing histone H3-K9 methyltransferase activity. Overexpression delays the exit of cells from the S-phase. The sequence is that of Transcription factor E2F6 from Mus musculus (Mouse).